The sequence spans 245 residues: 8-amino-3,8-dideoxy-manno-octulosonate cytidylyltransferase (245 aa).

This sequence belongs to the KdsB family.

It localises to the cytoplasm. It catalyses the reaction 8-amino-3,8-dideoxy-alpha-D-manno-octulosonate + CTP = CMP-8-amino-3,8-dideoxy-alpha-D-manno-oct-2-ulosonate + diphosphate. Its pathway is bacterial outer membrane biogenesis; lipopolysaccharide biosynthesis. Activates KDO8N (a required 8-carbon sugar) for incorporation into bacterial lipopolysaccharide in the Shewanella genus. The chain is 8-amino-3,8-dideoxy-manno-octulosonate cytidylyltransferase from Shewanella woodyi (strain ATCC 51908 / MS32).